The chain runs to 103 residues: Toluene-4-monooxygenase system, effector component (103 aa).

This sequence belongs to the TmoD/XamoD family. In terms of assembly, the alkene monooxygenase multicomponent enzyme system is composed of an electron transfer component and a monooxygenase component interacting with the effector protein TmoD. The electron transfer component is composed of a ferredoxin reductase (TmoF) and a ferredoxin (TmoC), and the monooxygenase component is formed by a heterohexamer (dimer of heterotrimers) of two alpha subunits (TmoA), two beta subunits (TmoE) and two gamma subunits (TmoB).

It functions in the pathway xenobiotic degradation; toluene degradation. Effector component of the toluene-4-monooxygenase multicomponent enzyme system which catalyzes the O2- and NADH-dependent hydroxylation of toluene to form p-cresol. Required for optimal efficiency and specificity of the holoenzyme. This Ectopseudomonas mendocina (Pseudomonas mendocina) protein is Toluene-4-monooxygenase system, effector component.